The primary structure comprises 303 residues: Oxygen-dependent coproporphyrinogen-III oxidase (303 aa).

Residue S94 coordinates substrate. A divalent metal cation-binding residues include H98 and H108. The Proton donor role is filled by H108. 110–112 (NVR) is a substrate binding site. Positions 147 and 177 each coordinate a divalent metal cation. The important for dimerization stretch occupies residues 242 to 277 (YVEFNLVYDRGTLFGLQTGGRTESILMSLPPLVRWE). 260–262 (GGR) contributes to the substrate binding site.

Belongs to the aerobic coproporphyrinogen-III oxidase family. Homodimer. Requires a divalent metal cation as cofactor.

The protein localises to the cytoplasm. The catalysed reaction is coproporphyrinogen III + O2 + 2 H(+) = protoporphyrinogen IX + 2 CO2 + 2 H2O. It functions in the pathway porphyrin-containing compound metabolism; protoporphyrin-IX biosynthesis; protoporphyrinogen-IX from coproporphyrinogen-III (O2 route): step 1/1. Involved in the heme biosynthesis. Catalyzes the aerobic oxidative decarboxylation of propionate groups of rings A and B of coproporphyrinogen-III to yield the vinyl groups in protoporphyrinogen-IX. The polypeptide is Oxygen-dependent coproporphyrinogen-III oxidase (Saccharophagus degradans (strain 2-40 / ATCC 43961 / DSM 17024)).